The chain runs to 1278 residues: MTLTERLREKISQAFYNHGLFCASYPIPIILFTGLCILACCYPLLKLPLPGTGPVEFTTPVKDYSPPPLTSDHKPGEPNEQPEWYVGAPVAYIQQIFVKSSVSPWHKNLLAVDVFRSPLSRAFQLVEEIRNHVLKDSSGTRSLEDVCLQVTDLLPGLRKLRNLLPEHGCLLLSPGNFWQNDRERFHADPDIIRTIHQHEPKTLQTSATLKDLLFGVPGKYSGVSLYTRKRLVSYTITLVFQHYHAKFLGSLRARLMLLHPSPNCSLRAESLVHVHFKEEIGIAELIPLVTTYIILFAYIYFSTRKIDMVKSKWGLALAAVVTVLSSLLMSVGLCTLFGLTPTLNGGEIFPYLVVVIGLENVLVLTKSVVSTPVDLEVKLRIAQGLSSESWSIMKNMATELGIVLIGYFTLVPAIQEFCLFAVVGLVSDFFLQMLFFTTVLSIDIRRMELADLNKRLPPEACLPPAKPVGRPTRFERQPTVRPSMPHTITLQPSSFRNLRLPKRLRVIYFLARTRLAQRLIMAGTVVWIGILVYTDPAGLRTYLAAQVTEQSPLGEGALAPLPVPSGVLPASHPDPAFSIFPPDASKLPENQTLPGEPPEPGGLAEGVHDSPAPEVTWGPEDEELWRKLSFRHWPTLFSYYNITLAKRYVSLLPVIPVTLRLNPREALEGRHPQDGRSAWPPPRPGQGGLWEAGPKGPGTAQAQRDLTLYKVAALGLASGIVLVLLLLCLYRVLCPRNYGQPGAGPGRRRRGELPCDDYGYAPPETEIVPLVLRGHLMDIECLASDGMLLVSCCLAGHVCVWDAQTGDCLTRIPHPGQRRDSGVGSGLETQETWERLSDGGKGGPEEPGDSPPLRHRPRGPPPPALFGDQPDLTCLIDTNFSARPQLPEPAQPEPRYRAGRRAQDSAGYDFSRLVQRVYQEGGMAPVHTPALRPPSPGPTFPLAPEDEAGFPPEKSCPSLAWAPSTDGSIWSLELQGSLIVVGRSSGRLEVWDAIEGTLRCSSEEVSSGITALVFLDRRIVAARLNGSLDFFSLETHTALSPLQFRGAPGRGSSPASPACSSSDRVACHLTHTVPCAHQKPITALKAAAGRLVTGSQDHTLRVFRLEDSCCLFTLQGHSGAITTVYIDQTMVLASGGQDGAICLWDVLTGSRVSHMFAHRGDVTSLTCTTSCVISSGLDDLISIWDRSTGIKLYSIQQDLGCGASLGVISDNLLVTGGQGCVSFWDLNYGDLLQTVYLGKNSEAQPARQILVLDNAAIVCNFGSELSLVYVPSVLEKLD.

At 1–18 the chain is on the cytoplasmic side; it reads MTLTERLREKISQAFYNH. The chain crosses the membrane as a helical span at residues 19 to 39; sequence GLFCASYPIPIILFTGLCILA. The Lumenal segment spans residues 40 to 279; that stretch reads CCYPLLKLPL…SLVHVHFKEE (240 aa). The interval 46–284 is loop-1; that stretch reads KLPLPGTGPV…HFKEEIGIAE (239 aa). A disordered region spans residues 60-80; the sequence is PVKDYSPPPLTSDHKPGEPNE. Residue Asn263 is glycosylated (N-linked (GlcNAc...) asparagine). Residues 280-300 traverse the membrane as a helical segment; it reads IGIAELIPLVTTYIILFAYIY. Residues 284–442 enclose the SSD domain; it reads ELIPLVTTYI…MLFFTTVLSI (159 aa). Topologically, residues 301 to 312 are cytoplasmic; it reads FSTRKIDMVKSK. A helical membrane pass occupies residues 313 to 333; sequence WGLALAAVVTVLSSLLMSVGL. At 334 to 344 the chain is on the lumenal side; that stretch reads CTLFGLTPTLN. The chain crosses the membrane as a helical span at residues 345-365; the sequence is GGEIFPYLVVVIGLENVLVLT. Over 366 to 401 the chain is Cytoplasmic; it reads KSVVSTPVDLEVKLRIAQGLSSESWSIMKNMATELG. The helical transmembrane segment at 402 to 422 threads the bilayer; that stretch reads IVLIGYFTLVPAIQEFCLFAV. A topological domain (lumenal) is located at residue Val423. Residues 424-444 form a helical membrane-spanning segment; that stretch reads GLVSDFFLQMLFFTTVLSIDI. The Cytoplasmic segment spans residues 445-518; it reads RRMELADLNK…FLARTRLAQR (74 aa). An ER export signal motif is present at residues 447-452; the sequence is MELADL. Glycyl lysine isopeptide (Lys-Gly) (interchain with G-Cter in ubiquitin) cross-links involve residues Lys454 and Lys466. Residues 519–539 form a helical membrane-spanning segment; it reads LIMAGTVVWIGILVYTDPAGL. A loop-7 region spans residues 535-710; the sequence is DPAGLRTYLA…QAQRDLTLYK (176 aa). The Lumenal portion of the chain corresponds to 540–707; the sequence is RTYLAAQVTE…GTAQAQRDLT (168 aa). The interval 581–618 is disordered; that stretch reads PPDASKLPENQTLPGEPPEPGGLAEGVHDSPAPEVTWG. N-linked (GlcNAc...) asparagine glycans are attached at residues Asn590 and Asn641. The interval 668-696 is disordered; that stretch reads EGRHPQDGRSAWPPPRPGQGGLWEAGPKG. The helical transmembrane segment at 708 to 728 threads the bilayer; sequence LYKVAALGLASGIVLVLLLLC. Residues 729–1278 lie on the Cytoplasmic side of the membrane; it reads LYRVLCPRNY…YVPSVLEKLD (550 aa). Residues 731–1278 are interaction with SREBF2; sequence RVLCPRNYGQ…YVPSVLEKLD (548 aa). The WD 1 repeat unit spans residues 771-811; the sequence is VLRGHLMDIECLASDGMLLVSCCLAGHVCVWDAQTGDCLTR. A phosphoserine mark is found at Ser821, Ser837, Ser850, Ser905, and Ser935. Positions 834 to 904 are disordered; it reads ERLSDGGKGG…RYRAGRRAQD (71 aa). WD repeat units lie at residues 951 to 1001 and 1004 to 1041; these read PPEK…LRCS and EVSSGITALVFLDRRIVAARLNGSLDFFSLETHTALSP. Arg1050 is subject to Omega-N-methylarginine. WD repeat units lie at residues 1076–1113, 1116–1154, 1157–1194, and 1196–1234; these read AHQKPITALKAAAGRLVTGSQDHTLRVFRLEDSCCLFT, GHSGAITTVYIDQTMVLASGGQDGAICLWDVLTGSRVSH, AHRGDVTSLTCTTSCVISSGLDDLISIWDRSTGIKLYS, and QQDLGCGASLGVISDNLLVTGGQGCVSFWDLNYGDLLQT.

It belongs to the WD repeat SCAP family. In terms of assembly, membrane region forms a homotetramer. Component of the SCAP-SREBP complex (composed of SCAP and SREBF1/SREBP1 or SREBF2/SREBP2); interacts with SREBF1/SREBP1 or SREBF2/SREBP2 through its C-terminal cytoplasmic domain. Forms a ternary complex with INSIG1 or INSIG2 through its transmembrane domains at high sterol concentrations. Interacts with PAQR3; the interaction anchors the SCAP-SREBP complex to the Golgi apparatus in low cholesterol conditions. Interacts with the SEC23-SEC24 complex in a SAR1-GTP-dependent manner through an ER export signal in its third cytoplasmic loop. Interacts with RNF139; the interaction inhibits the interaction of SCAP with SEC24B and hampering the ER to Golgi transport of the SCAP-SREBP complex. Interacts with SPRING1. Ubiquitinated at Lys-454 and Lys-466. RNF145 triggers ubiquitination of SCAP, likely inhibiting SCAP-SREBP complex transport to the Golgi apparatus and the subsequent processing/maturation of SREBF2/SREBP2.

It localises to the endoplasmic reticulum membrane. The protein resides in the golgi apparatus membrane. Its subcellular location is the cytoplasmic vesicle. The protein localises to the COPII-coated vesicle membrane. In terms of biological role, escort protein required for cholesterol as well as lipid homeostasis. Regulates export of the SCAP-SREBP complex from the endoplasmic reticulum to the Golgi upon low cholesterol, thereby regulating the processing of sterol regulatory element-binding proteins (SREBPs) SREBF1/SREBP1 and SREBF2/SREBP2. At high sterol concentrations, formation of a ternary complex with INSIG (INSIG1 or INSIG2) leads to mask the ER export signal in SCAP, promoting retention of the complex in the endoplasmic reticulum. Low sterol concentrations trigger release of INSIG, a conformational change in the SSD domain of SCAP, unmasking of the ER export signal, promoting recruitment into COPII-coated vesicles and transport of the SCAP-SREBP to the Golgi: in the Golgi, SREBPs are then processed, releasing the transcription factor fragment of SREBPs from the membrane, its import into the nucleus and up-regulation of LDLR, INSIG1 and the mevalonate pathway. Binds cholesterol via its SSD domain. The polypeptide is Sterol regulatory element-binding protein cleavage-activating protein (Bos taurus (Bovine)).